The sequence spans 471 residues: Threonine--tRNA ligase catalytic subunit (471 aa).

The segment at 8 to 333 is catalytic; the sequence is THIDYAYELD…YLEHRRGRMP (326 aa). Cys-112, His-166, and His-310 together coordinate Zn(2+).

The protein belongs to the class-II aminoacyl-tRNA synthetase family. As to quaternary structure, homodimer. Probably interacts with its editing subunit. It depends on Zn(2+) as a cofactor.

The protein resides in the cytoplasm. The catalysed reaction is tRNA(Thr) + L-threonine + ATP = L-threonyl-tRNA(Thr) + AMP + diphosphate + H(+). Catalyzes the attachment of threonine to tRNA(Thr) in a two-step reaction: L-threonine is first activated by ATP to form Thr-AMP and then transferred to the acceptor end of tRNA(Thr). This protein is probably not able to deacylate mischarged L-seryl-tRNA(Thr) as it lacks the appropriate domain. This is Threonine--tRNA ligase catalytic subunit from Aeropyrum pernix (strain ATCC 700893 / DSM 11879 / JCM 9820 / NBRC 100138 / K1).